The sequence spans 119 residues: Holo-[acyl-carrier-protein] synthase (119 aa).

Residues Asp-8 and Glu-58 each coordinate Mg(2+).

It belongs to the P-Pant transferase superfamily. AcpS family. The cofactor is Mg(2+).

Its subcellular location is the cytoplasm. The enzyme catalyses apo-[ACP] + CoA = holo-[ACP] + adenosine 3',5'-bisphosphate + H(+). Transfers the 4'-phosphopantetheine moiety from coenzyme A to a Ser of acyl-carrier-protein. In Bacillus mycoides (strain KBAB4) (Bacillus weihenstephanensis), this protein is Holo-[acyl-carrier-protein] synthase.